A 171-amino-acid polypeptide reads, in one-letter code: Large ribosomal subunit protein uL10 (171 aa).

The protein belongs to the universal ribosomal protein uL10 family. As to quaternary structure, part of the ribosomal stalk of the 50S ribosomal subunit. The N-terminus interacts with L11 and the large rRNA to form the base of the stalk. The C-terminus forms an elongated spine to which L12 dimers bind in a sequential fashion forming a multimeric L10(L12)X complex.

Forms part of the ribosomal stalk, playing a central role in the interaction of the ribosome with GTP-bound translation factors. The chain is Large ribosomal subunit protein uL10 from Corynebacterium glutamicum (strain R).